The following is a 545-amino-acid chain: CTP synthase (545 aa).

Residues 1 to 266 form an amidoligase domain region; the sequence is MTTNYIFVTG…DDYICKRFSL (266 aa). Residue S14 participates in CTP binding. S14 contacts UTP. ATP-binding positions include 15–20 and D72; that span reads SLGKGI. The Mg(2+) site is built by D72 and E140. CTP is bound by residues 147–149, 187–192, and K223; these read DIE and KTKPTQ. UTP is bound by residues 187–192 and K223; that span reads KTKPTQ. 239 to 241 provides a ligand contact to ATP; that stretch reads KDV. In terms of domain architecture, Glutamine amidotransferase type-1 spans 291–542; the sequence is TIGMIGKYVE…VKAAGEYQKR (252 aa). G352 contacts L-glutamine. The Nucleophile; for glutamine hydrolysis role is filled by C379. L-glutamine contacts are provided by residues 380–383, E403, and R470; that span reads LGMQ. Active-site residues include H515 and E517.

The protein belongs to the CTP synthase family. In terms of assembly, homotetramer.

It catalyses the reaction UTP + L-glutamine + ATP + H2O = CTP + L-glutamate + ADP + phosphate + 2 H(+). The catalysed reaction is L-glutamine + H2O = L-glutamate + NH4(+). The enzyme catalyses UTP + NH4(+) + ATP = CTP + ADP + phosphate + 2 H(+). Its pathway is pyrimidine metabolism; CTP biosynthesis via de novo pathway; CTP from UDP: step 2/2. Its activity is regulated as follows. Allosterically activated by GTP, when glutamine is the substrate; GTP has no effect on the reaction when ammonia is the substrate. The allosteric effector GTP functions by stabilizing the protein conformation that binds the tetrahedral intermediate(s) formed during glutamine hydrolysis. Inhibited by the product CTP, via allosteric rather than competitive inhibition. In terms of biological role, catalyzes the ATP-dependent amination of UTP to CTP with either L-glutamine or ammonia as the source of nitrogen. Regulates intracellular CTP levels through interactions with the four ribonucleotide triphosphates. The polypeptide is CTP synthase (Yersinia enterocolitica serotype O:8 / biotype 1B (strain NCTC 13174 / 8081)).